Consider the following 123-residue polypeptide: Large ribosomal subunit protein uL29 (123 aa).

This sequence belongs to the universal ribosomal protein uL29 family.

The chain is Large ribosomal subunit protein uL29 (RPL35) from Babesia bovis.